The following is a 541-amino-acid chain: Catalase (541 aa).

The disordered stretch occupies residues 1 to 20 (MPQTKGKPHEEQLEQYKNSQ). Active-site residues include H74 and N147. Y357 serves as a coordination point for heme.

Belongs to the catalase family. It depends on heme as a cofactor.

The protein localises to the peroxisome matrix. The enzyme catalyses 2 H2O2 = O2 + 2 H2O. Catalyzes the degradation of hydrogen peroxide (H(2)O(2)) generated by peroxisomal oxidases to water and oxygen, thereby protecting cells from the toxic effects of hydrogen peroxide. The sequence is that of Catalase (CAT) from Ascaris suum (Pig roundworm).